Reading from the N-terminus, the 240-residue chain is Adiponectin (240 aa).

A signal peptide spans 1 to 17 (MLLQGALLLLLALPSHG). Position 28 is a 5-hydroxylysine (Lys28). Lys28 is a glycosylation site (O-linked (Gal...) hydroxylysine). Residues 29-100 (GACAGWMAGI…GTPGRKGEPG (72 aa)) form a disordered region. Cys31 bears the S-(2-succinyl)cysteine mark. 4-hydroxyproline is present on residues Pro39, Pro42, and Pro48. In terms of domain architecture, Collagen-like spans 43-102 (GHNGTPGRDGRDGTPGEKGEKGDPGLVGPKGDTGETGITGIEGPRGFPGTPGRKGEPGES). The span at 50–65 (RDGRDGTPGEKGEKGD) shows a compositional bias: basic and acidic residues. 3 positions are modified to 5-hydroxylysine: Lys60, Lys63, and Lys72. Lys60, Lys63, and Lys72 each carry an O-linked (Gal...) hydroxylysine glycan. The residue at position 86 (Pro86) is a 4-hydroxyproline. Residue Lys96 is modified to 5-hydroxylysine. An O-linked (Gal...) hydroxylysine glycan is attached at Lys96. Residues 103 to 240 (AYVYRSAFSV…GFLLYHNIVE (138 aa)) enclose the C1q domain.

As to quaternary structure, homomultimer. Forms trimers, hexamers and 12- to 18-mers. The trimers (low molecular weight complexes / LMW) are assembled via non-covalent interactions of the collagen-like domains in a triple helix and hydrophobic interactions within the globular C1q domain. Several trimers can associate to form disulfide-linked hexamers (middle molecular weight complexes / MMW) and larger complexes (higher molecular weight / HMW). The HMW-complex assembly is also modulated by the degree of lysine hydroxylation and glycosylation. LMW, MMW and HMW complexes bind to HBEGF, MMW and HMW complexes bind to PDGFB, and HMW complex binds to FGF2. Interacts with CTRP9 via the C1q domain (heterotrimeric complex). HMW complexes are more extensively glycosylated than smaller oligomers. Hydroxylation and glycosylation of the lysine residues within the collagen-like domain of adiponectin seem to be critically involved in regulating the formation and/or secretion of HMW complexes and consequently contribute to the insulin-sensitizing activity of adiponectin in hepatocytes. In terms of processing, O-glycosylated. O-linked glycans on hydroxylysine residues consist of Glc-Gal disaccharides bound to the oxygen atom of post-translationally added hydroxyl groups. O-linked glycosylations elsewhere disialylated with the structure Neu5Acalpha2-&gt;8Neu5Acalpha2-&gt;3Gal. Sialylated by alpha 2,8-sialyltransferase III. Desialylated forms are rapidly cleared from the circulation. Not N-glycosylated. Post-translationally, succination of Cys-31 by the Krebs cycle intermediate fumarate, which leads to S-(2-succinyl)cysteine residues, inhibits polymerization and secretion of adiponectin. Adiponectin is a major target for succination in both adipocytes and adipose tissue of diabetic mammals. It was proposed that succination of proteins is a biomarker of mitochondrial stress and accumulation of Krebs cycle intermediates in adipose tissue in diabetes and that succination of adiponectin may contribute to the decrease in plasma adiponectin in diabetes.

The protein resides in the secreted. With respect to regulation, polymerization and secretion of adiponectin is inhibited by succination of cysteine residues by the Krebs cycle intermediate fumarate, which leads to S-(2-succinyl)cysteine residues. Important adipokine involved in the control of fat metabolism and insulin sensitivity, with direct anti-diabetic, anti-atherogenic and anti-inflammatory activities. Stimulates AMPK phosphorylation and activation in the liver and the skeletal muscle, enhancing glucose utilization and fatty-acid combustion. Antagonizes TNF-alpha by negatively regulating its expression in various tissues such as liver and macrophages, and also by counteracting its effects. Inhibits endothelial NF-kappa-B signaling through a cAMP-dependent pathway. May play a role in cell growth, angiogenesis and tissue remodeling by binding and sequestering various growth factors with distinct binding affinities, depending on the type of complex, LMW, MMW or HMW. This is Adiponectin (ADIPOQ) from Bos taurus (Bovine).